The chain runs to 383 residues: Probable L-tyrosine/L-aspartate decarboxylase (383 aa).

N6-(pyridoxal phosphate)lysine is present on K227.

Belongs to the group II decarboxylase family. MfnA subfamily. Pyridoxal 5'-phosphate serves as cofactor.

The catalysed reaction is L-tyrosine + H(+) = tyramine + CO2. It catalyses the reaction L-aspartate + H(+) = beta-alanine + CO2. It participates in cofactor biosynthesis; methanofuran biosynthesis. The protein operates within cofactor biosynthesis; coenzyme A biosynthesis. Functionally, catalyzes the decarboxylation of L-tyrosine to produce tyramine for methanofuran biosynthesis. Can also catalyze the decarboxylation of L-aspartate to produce beta-alanine for coenzyme A (CoA) biosynthesis. The chain is Probable L-tyrosine/L-aspartate decarboxylase from Methanothrix thermoacetophila (strain DSM 6194 / JCM 14653 / NBRC 101360 / PT) (Methanosaeta thermophila).